The following is a 203-amino-acid chain: UPF0637 protein SSP1683 (203 aa).

This sequence belongs to the UPF0637 family.

The chain is UPF0637 protein SSP1683 from Staphylococcus saprophyticus subsp. saprophyticus (strain ATCC 15305 / DSM 20229 / NCIMB 8711 / NCTC 7292 / S-41).